A 205-amino-acid chain; its full sequence is Large ribosomal subunit protein uL4 (205 aa).

It belongs to the universal ribosomal protein uL4 family. In terms of assembly, part of the 50S ribosomal subunit.

Functionally, one of the primary rRNA binding proteins, this protein initially binds near the 5'-end of the 23S rRNA. It is important during the early stages of 50S assembly. It makes multiple contacts with different domains of the 23S rRNA in the assembled 50S subunit and ribosome. In terms of biological role, forms part of the polypeptide exit tunnel. The protein is Large ribosomal subunit protein uL4 of Thermus thermophilus (strain ATCC BAA-163 / DSM 7039 / HB27).